A 259-amino-acid chain; its full sequence is Glutamate 5-kinase (259 aa).

Residue K18 coordinates ATP. Substrate-binding residues include S54, D141, and N153. 173-174 contributes to the ATP binding site; it reads SD.

It belongs to the glutamate 5-kinase family.

Its subcellular location is the cytoplasm. The enzyme catalyses L-glutamate + ATP = L-glutamyl 5-phosphate + ADP. It participates in amino-acid biosynthesis; L-proline biosynthesis; L-glutamate 5-semialdehyde from L-glutamate: step 1/2. Functionally, catalyzes the transfer of a phosphate group to glutamate to form L-glutamate 5-phosphate. This chain is Glutamate 5-kinase, found in Clavibacter sepedonicus (Clavibacter michiganensis subsp. sepedonicus).